We begin with the raw amino-acid sequence, 355 residues long: cAMP-dependent protein kinase catalytic subunit PRKX (355 aa).

The residue at position 1 (M1) is an N-acetylmethionine. The disordered stretch occupies residues M1 to S42. Positions W46–F300 constitute a Protein kinase domain. ATP-binding positions include V52–V60 and K75. Residue D169 is the Proton acceptor of the active site. Residue T200 is modified to Phosphothreonine. In terms of domain architecture, AGC-kinase C-terminal spans R301 to F355. Residues P316–F355 are disordered. Residues E337 to F355 are compositionally biased toward basic and acidic residues.

This sequence belongs to the protein kinase superfamily. AGC Ser/Thr protein kinase family. cAMP subfamily. Like other cAMP-dependent protein kinases, the inactive holoenzyme is probably composed of 2 PRKX catalytic subunits and a dimer of regulatory subunits. Interacts (cAMP-dependent) specifically with the regulatory subunits PRKAR1A and PRKAR1B. Compared to other cAMP-dependent serine/threonine protein kinases, does not interact with the 2 other PKA regulatory subunits PRKAR2A and PRKAR2B. Interacts with PIN1 (via WW domain). Interacts with cAMP-dependent protein kinase inhibitor/PKI proteins; inhibits PRKX. Interacts with GPKOW. Interacts with SMAD6. Interacts with PKD1; involved in differentiation and controlled morphogenesis of the kidney. Post-translationally, phosphorylated; autophosphorylates in vitro. Widely expressed.

The protein localises to the cytoplasm. It is found in the nucleus. The enzyme catalyses L-seryl-[protein] + ATP = O-phospho-L-seryl-[protein] + ADP + H(+). The catalysed reaction is L-threonyl-[protein] + ATP = O-phospho-L-threonyl-[protein] + ADP + H(+). Binding of cAMP to the PRKAR1A or PRKAR1B regulatory subunits induces dissociation of the holoenzyme heterotetramer. The released monomeric PRKX is then active and able to phosphorylate its substrates. Its function is as follows. Serine/threonine protein kinase regulated by and mediating cAMP signaling in cells. Acts through phosphorylation of downstream targets that may include CREB, SMAD6 and PKD1 and has multiple functions in cellular differentiation and epithelial morphogenesis. Regulates myeloid cell differentiation through SMAD6 phosphorylation. Involved in nephrogenesis by stimulating renal epithelial cell migration and tubulogenesis. Also involved in angiogenesis through stimulation of endothelial cell proliferation, migration and vascular-like structure formation. The sequence is that of cAMP-dependent protein kinase catalytic subunit PRKX (Prkx) from Mus musculus (Mouse).